We begin with the raw amino-acid sequence, 407 residues long: Phosphopentomutase (407 aa).

The Mn(2+) site is built by Asp11, Asp305, His310, Asp346, His347, and His358.

It belongs to the phosphopentomutase family. The cofactor is Mn(2+).

The protein localises to the cytoplasm. It catalyses the reaction 2-deoxy-alpha-D-ribose 1-phosphate = 2-deoxy-D-ribose 5-phosphate. The enzyme catalyses alpha-D-ribose 1-phosphate = D-ribose 5-phosphate. It participates in carbohydrate degradation; 2-deoxy-D-ribose 1-phosphate degradation; D-glyceraldehyde 3-phosphate and acetaldehyde from 2-deoxy-alpha-D-ribose 1-phosphate: step 1/2. Functionally, isomerase that catalyzes the conversion of deoxy-ribose 1-phosphate (dRib-1-P) and ribose 1-phosphate (Rib-1-P) to deoxy-ribose 5-phosphate (dRib-5-P) and ribose 5-phosphate (Rib-5-P), respectively. In Legionella pneumophila (strain Lens), this protein is Phosphopentomutase.